Here is a 395-residue protein sequence, read N- to C-terminus: Putative nickel insertion protein (395 aa).

Belongs to the LarC family.

The polypeptide is Putative nickel insertion protein (Roseiflexus castenholzii (strain DSM 13941 / HLO8)).